A 239-amino-acid chain; its full sequence is Octanoyltransferase (239 aa).

A BPL/LPL catalytic domain is found at 48-236; it reads EGGDELVWLV…AFETVFGETT (189 aa). Substrate contacts are provided by residues 87–94, 167–169, and 180–182; these read RGGEYTYH, ALG, and GLS. Cys198 serves as the catalytic Acyl-thioester intermediate.

The protein belongs to the LipB family.

It is found in the cytoplasm. The catalysed reaction is octanoyl-[ACP] + L-lysyl-[protein] = N(6)-octanoyl-L-lysyl-[protein] + holo-[ACP] + H(+). It participates in protein modification; protein lipoylation via endogenous pathway; protein N(6)-(lipoyl)lysine from octanoyl-[acyl-carrier-protein]: step 1/2. Catalyzes the transfer of endogenously produced octanoic acid from octanoyl-acyl-carrier-protein onto the lipoyl domains of lipoate-dependent enzymes. Lipoyl-ACP can also act as a substrate although octanoyl-ACP is likely to be the physiological substrate. This is Octanoyltransferase from Rhizobium etli (strain ATCC 51251 / DSM 11541 / JCM 21823 / NBRC 15573 / CFN 42).